The primary structure comprises 855 residues: DNA mismatch repair protein MutS (855 aa).

613-620 (GPNMGGKS) is a binding site for ATP. The tract at residues 795 to 816 (ETTSLPHEVPSQQSGKPASPMQ) is disordered. Residues 796–816 (TTSLPHEVPSQQSGKPASPMQ) show a composition bias toward polar residues.

Belongs to the DNA mismatch repair MutS family.

Functionally, this protein is involved in the repair of mismatches in DNA. It is possible that it carries out the mismatch recognition step. This protein has a weak ATPase activity. The polypeptide is DNA mismatch repair protein MutS (Pseudomonas paraeruginosa (strain DSM 24068 / PA7) (Pseudomonas aeruginosa (strain PA7))).